Consider the following 430-residue polypeptide: Probable carboxypeptidase AO090003000058 (430 aa).

A signal peptide spans 1–16 (MKSIYSLVLCTALTAA). An N-linked (GlcNAc...) asparagine glycan is attached at N84. Position 156 (D156) interacts with Zn(2+). The active-site Proton acceptor is the E188. A Zn(2+)-binding site is contributed by E189. An N-linked (GlcNAc...) asparagine glycan is attached at N285.

Belongs to the peptidase M20A family. Zn(2+) is required as a cofactor.

It localises to the secreted. This chain is Probable carboxypeptidase AO090003000058, found in Aspergillus oryzae (strain ATCC 42149 / RIB 40) (Yellow koji mold).